Here is a 626-residue protein sequence, read N- to C-terminus: 4-hydroxy-3-methylbut-2-en-1-yl diphosphate synthase (flavodoxin) (626 aa).

[4Fe-4S] cluster contacts are provided by Cys-521, Cys-524, Cys-555, and Glu-562.

This sequence belongs to the IspG family. [4Fe-4S] cluster is required as a cofactor.

It catalyses the reaction (2E)-4-hydroxy-3-methylbut-2-enyl diphosphate + oxidized [flavodoxin] + H2O + 2 H(+) = 2-C-methyl-D-erythritol 2,4-cyclic diphosphate + reduced [flavodoxin]. It functions in the pathway isoprenoid biosynthesis; isopentenyl diphosphate biosynthesis via DXP pathway; isopentenyl diphosphate from 1-deoxy-D-xylulose 5-phosphate: step 5/6. Its function is as follows. Converts 2C-methyl-D-erythritol 2,4-cyclodiphosphate (ME-2,4cPP) into 1-hydroxy-2-methyl-2-(E)-butenyl 4-diphosphate. This chain is 4-hydroxy-3-methylbut-2-en-1-yl diphosphate synthase (flavodoxin), found in Bacteroides fragilis (strain ATCC 25285 / DSM 2151 / CCUG 4856 / JCM 11019 / LMG 10263 / NCTC 9343 / Onslow / VPI 2553 / EN-2).